The chain runs to 186 residues: Peptidyl-tRNA hydrolase (186 aa).

Tyr-17 contacts tRNA. His-22 serves as the catalytic Proton acceptor. Residues Tyr-64 and Asn-66 each coordinate tRNA.

The protein belongs to the PTH family. In terms of assembly, monomer.

The protein resides in the cytoplasm. It catalyses the reaction an N-acyl-L-alpha-aminoacyl-tRNA + H2O = an N-acyl-L-amino acid + a tRNA + H(+). Hydrolyzes ribosome-free peptidyl-tRNAs (with 1 or more amino acids incorporated), which drop off the ribosome during protein synthesis, or as a result of ribosome stalling. In terms of biological role, catalyzes the release of premature peptidyl moieties from peptidyl-tRNA molecules trapped in stalled 50S ribosomal subunits, and thus maintains levels of free tRNAs and 50S ribosomes. This Methylacidiphilum infernorum (isolate V4) (Methylokorus infernorum (strain V4)) protein is Peptidyl-tRNA hydrolase.